We begin with the raw amino-acid sequence, 151 residues long: Putative pre-16S rRNA nuclease (151 aa).

Belongs to the YqgF nuclease family.

The protein localises to the cytoplasm. Could be a nuclease involved in processing of the 5'-end of pre-16S rRNA. This Myxococcus xanthus (strain DK1622) protein is Putative pre-16S rRNA nuclease.